The sequence spans 404 residues: Probable tRNA sulfurtransferase (404 aa).

One can recognise a THUMP domain in the interval 60–165 (TAVAESLKQV…EEAAYLSYET (106 aa)). Residues 183–184 (ML), 208–209 (HF), arginine 265, glycine 287, and glutamine 296 contribute to the ATP site.

It belongs to the ThiI family.

It is found in the cytoplasm. The catalysed reaction is [ThiI sulfur-carrier protein]-S-sulfanyl-L-cysteine + a uridine in tRNA + 2 reduced [2Fe-2S]-[ferredoxin] + ATP + H(+) = [ThiI sulfur-carrier protein]-L-cysteine + a 4-thiouridine in tRNA + 2 oxidized [2Fe-2S]-[ferredoxin] + AMP + diphosphate. It catalyses the reaction [ThiS sulfur-carrier protein]-C-terminal Gly-Gly-AMP + S-sulfanyl-L-cysteinyl-[cysteine desulfurase] + AH2 = [ThiS sulfur-carrier protein]-C-terminal-Gly-aminoethanethioate + L-cysteinyl-[cysteine desulfurase] + A + AMP + 2 H(+). Its pathway is cofactor biosynthesis; thiamine diphosphate biosynthesis. Its function is as follows. Catalyzes the ATP-dependent transfer of a sulfur to tRNA to produce 4-thiouridine in position 8 of tRNAs, which functions as a near-UV photosensor. Also catalyzes the transfer of sulfur to the sulfur carrier protein ThiS, forming ThiS-thiocarboxylate. This is a step in the synthesis of thiazole, in the thiamine biosynthesis pathway. The sulfur is donated as persulfide by IscS. The chain is Probable tRNA sulfurtransferase from Streptococcus pneumoniae (strain ATCC 700669 / Spain 23F-1).